We begin with the raw amino-acid sequence, 534 residues long: Probable protein kinase UbiB (534 aa).

Residues 23–43 (DLLFDLPLPWFLLALRYVLPW) form a helical membrane-spanning segment. Residues 125–492 (RFDVEPLASA…WKKRKDDWFL (368 aa)) enclose the Protein kinase domain. Residues 131–139 (LASASVAQV) and Lys153 contribute to the ATP site. The active-site Proton acceptor is Asp288. 2 helical membrane-spanning segments follow: residues 490–510 (WFLR…AAGG) and 512–532 (LHEL…YLVV).

It belongs to the ABC1 family. UbiB subfamily.

It is found in the cell inner membrane. It participates in cofactor biosynthesis; ubiquinone biosynthesis [regulation]. Its function is as follows. Is probably a protein kinase regulator of UbiI activity which is involved in aerobic coenzyme Q (ubiquinone) biosynthesis. The protein is Probable protein kinase UbiB of Pseudomonas fluorescens (strain Pf0-1).